Here is a 486-residue protein sequence, read N- to C-terminus: PTS system N-acetylmuramic acid-specific EIIBC component (486 aa).

Residues 1–89 (MAKITQTMIS…NKLIESVING (89 aa)) enclose the PTS EIIB type-1 domain. The active-site Phosphocysteine intermediate; for EIIB activity is the Cys-28. Positions 127–486 (SKFATIFTPL…FFGSKDVDLS (360 aa)) constitute a PTS EIIC type-1 domain. Helical transmembrane passes span 129–149 (FATI…LLGF), 170–190 (LIAY…ILIG), 196–216 (AFGG…LGYN), 230–250 (FFGY…AAII), 268–288 (MILT…VVIM), 312–332 (AAIL…QGFV), 347–367 (LFPI…ALYF), 381–401 (GAII…VTLP), 411–431 (IGGA…LPVG), and 453–473 (IFAG…VGFL).

The protein localises to the cell inner membrane. The catalysed reaction is N-acetyl-beta-D-muramate(out) + N(pros)-phospho-L-histidyl-[protein] = N-acetyl-beta-D-muramate 6-phosphate(in) + L-histidyl-[protein]. Functionally, the phosphoenolpyruvate-dependent sugar phosphotransferase system (sugar PTS), a major carbohydrate active transport system, catalyzes the phosphorylation of incoming sugar substrates concomitantly with their translocation across the cell membrane. This system is involved in N-acetylmuramic acid (MurNAc) transport, yielding cytoplasmic MurNAc-6-P. Is also able to take up anhydro-N-acetylmuramic acid (anhMurNAc), but cannot phosphorylate the carbon 6, probably because of the 1,6-anhydro ring. The chain is PTS system N-acetylmuramic acid-specific EIIBC component (murP) from Vibrio vulnificus (strain CMCP6).